Consider the following 487-residue polypeptide: ATP synthase subunit beta (487 aa).

An ATP-binding site is contributed by 164 to 171 (GGAGVGKT).

Belongs to the ATPase alpha/beta chains family. In terms of assembly, F-type ATPases have 2 components, CF(1) - the catalytic core - and CF(0) - the membrane proton channel. CF(1) has five subunits: alpha(3), beta(3), gamma(1), delta(1), epsilon(1). CF(0) has four main subunits: a(1), b(1), b'(1) and c(9-12).

The protein resides in the cellular thylakoid membrane. It catalyses the reaction ATP + H2O + 4 H(+)(in) = ADP + phosphate + 5 H(+)(out). In terms of biological role, produces ATP from ADP in the presence of a proton gradient across the membrane. The catalytic sites are hosted primarily by the beta subunits. This is ATP synthase subunit beta from Synechococcus sp. (strain CC9311).